The following is a 363-amino-acid chain: 3-dehydroquinate synthase (363 aa).

NAD(+)-binding positions include 75–80 (DAEEGK), 109–113 (GAVTD), 133–134 (TS), lysine 146, lysine 155, and 173–176 (TLQT). Positions 188, 251, and 267 each coordinate Zn(2+).

The protein belongs to the sugar phosphate cyclases superfamily. Dehydroquinate synthase family. Co(2+) serves as cofactor. It depends on Zn(2+) as a cofactor. The cofactor is NAD(+).

It localises to the cytoplasm. It carries out the reaction 7-phospho-2-dehydro-3-deoxy-D-arabino-heptonate = 3-dehydroquinate + phosphate. The protein operates within metabolic intermediate biosynthesis; chorismate biosynthesis; chorismate from D-erythrose 4-phosphate and phosphoenolpyruvate: step 2/7. Catalyzes the conversion of 3-deoxy-D-arabino-heptulosonate 7-phosphate (DAHP) to dehydroquinate (DHQ). In Paenarthrobacter aurescens (strain TC1), this protein is 3-dehydroquinate synthase.